Consider the following 420-residue polypeptide: Calsequestrin-1 (420 aa).

Positions 1-22 (MKGPWLVLAALCLSLANLGPRG) are cleaved as a signal peptide. N338 carries an N-linked (GlcNAc...) asparagine glycan. The tract at residues 369–420 (LEGEVNTEDDDDDDDDDDDDDDDDDDDDDDDDDDDDDDDDDDDDDDDDDDDD) is disordered.

Belongs to the calsequestrin family. As to quaternary structure, monomer; increases in response to a depletion of intracellular calcium. Homodimer. Homotetramer and homopolymer. Can form linear homooligomers. Ca(2+) ions promote oligomerization. As to expression, detected in skeletal muscle (at protein level). Detected in skeletal muscle.

The protein resides in the endoplasmic reticulum. The protein localises to the sarcoplasmic reticulum. It is found in the sarcoplasmic reticulum lumen. It localises to the sarcoplasmic reticulum membrane. Its subcellular location is the mitochondrion matrix. Functionally, calsequestrin is a high-capacity, moderate affinity, calcium-binding protein and thus acts as an internal calcium store in muscle. Calcium ions are bound by clusters of acidic residues at the protein surface, often at the interface between subunits. Can bind around 80 Ca(2+) ions. Regulates the release of lumenal Ca(2+) via the calcium release channel RYR1; this plays an important role in triggering muscle contraction. Negatively regulates store-operated Ca(2+) entry (SOCE) activity. The sequence is that of Calsequestrin-1 from Pelophylax lessonae (Pool frog).